The chain runs to 757 residues: MNLSGSSCGSPSSADVSNDFKDLWTKLKEYHDKETQGLQVKVTKLKKERILDAQRLEEFFTKNQQLREQQKVLHETIKVLEDRLRAGLCDRCAVTEEHMRKKQQEFENIRQQNLKLITELMNEKNTLQEENKKLSEQLQQKIENDQPHKATDLESEEDVIPDSPITTFSFSGTNRLRRKENLRVRYIEQTHAKLEHSGCAHELRTVPKSSAHPQHKPKESEILVADTCDQSQAPVAKPHGKSSYTPDNLATVVAETLGLCVQEESESRGPQSPLGDELYHCLEGDHKKQAFEECRRNSEDNLRFSDSKTPFQEELTTRVSSPVFGAPSNVKSSLGLNTSLSPSLLETGKKTHLKTVPLSNTSAPGPEKPRSKSEDGTLITHHHLGTEVNKIPSQSSSNKQMLINKNTSEPISEQGNIGHSKDTDRDKHVVPLKSLGGRTKRKKIEEESEDEVICPQASFDKENAFPFPLDSHSSMNGDYVMDKPLDLSDRFSAIQRQEKSQGCENSKIRFRQVTLYEALKPIPRDSSSSRKALSGSCGLTKDSPEEPCLQESLFQSLSKSPDNKTLLQIKEENPVFKIPLRPRESFETENLFDDTKGAGSHEPIKIKTRSVRGACEVASVLQLNPCRIAKTKSLQNNQDVSFENIQWSIDPGADLSQYKMGVTVDDTKDGSQSRLAGETVDMDCTLVSETMLLKLKKQEQKGEESPNGERKMNDSLEDMFDRTTHEEYESCLAESFPQVADEEKELSTTTKKPNISW.

The interval 22-45 (DLWTKLKEYHDKETQGLQVKVTKL) is essential for binding to the MRN complex and for RPA focus formation on DNA damage. The stretch at 35–84 (TQGLQVKVTKLKKERILDAQRLEEFFTKNQQLREQQKVLHETIKVLEDRL) forms a coiled coil. The segment at 45-160 (LKKERILDAQ…TDLESEEDVI (116 aa)) is required for interaction with LMO4, probably by stabilizing the interaction through RPPB8 dimerization. Residues Lys62 and Lys115 each participate in a glycyl lysine isopeptide (Lys-Gly) (interchain with G-Cter in SUMO2) cross-link. The stretch at 117–138 (ITELMNEKNTLQEENKKLSEQL) forms a coiled coil. Lys193 is covalently cross-linked (Glycyl lysine isopeptide (Lys-Gly) (interchain with G-Cter in SUMO2)). Ser272 is subject to Phosphoserine. A Phosphothreonine modification is found at Thr309. Phosphoserine occurs at positions 320, 321, and 343. A disordered region spans residues 348-375 (GKKTHLKTVPLSNTSAPGPEKPRSKSED). Residues Lys354 and Lys372 each participate in a glycyl lysine isopeptide (Lys-Gly) (interchain with G-Cter in SUMO2) cross-link. The residue at position 373 (Ser373) is a Phosphoserine. Glycyl lysine isopeptide (Lys-Gly) (interchain with G-Cter in SUMO2) cross-links involve residues Lys390, Lys399, and Lys405. Positions 407–417 (TSEPISEQGNI) are enriched in polar residues. The interval 407–430 (TSEPISEQGNIGHSKDTDRDKHVV) is disordered. Over residues 419 to 429 (HSKDTDRDKHV) the composition is skewed to basic and acidic residues. Residues Lys433 and Lys443 each participate in a glycyl lysine isopeptide (Lys-Gly) (interchain with G-Cter in SUMO2) cross-link. Residues 484 to 488 (PLDLS) form a PXDLS motif region. A PXDLS motif motif is present at residues 484-488 (PLDLS). Residues 503–551 (CENSKIRFRQVTLYEALKPIPRDSSSSRKALSGSCGLTKDSPEEPCLQE) form a damage-recruitment motif region. A Glycyl lysine isopeptide (Lys-Gly) (interchain with G-Cter in SUMO2); alternate cross-link involves residue Lys520. The tract at residues 524-544 (RDSSSSRKALSGSCGLTKDSP) is disordered. Glycyl lysine isopeptide (Lys-Gly) (interchain with G-Cter in SUMO2) cross-links involve residues Lys564 and Lys570. A Glycyl lysine isopeptide (Lys-Gly) (interchain with G-Cter in SUMO2); alternate cross-link involves residue Lys596. Residues Lys605, Lys630, and Lys632 each participate in a glycyl lysine isopeptide (Lys-Gly) (interchain with G-Cter in SUMO2) cross-link. Residues 633–677 (SLQNNQDVSFENIQWSIDPGADLSQYKMGVTVDDTKDGSQSRLAG) form a required for interaction with LMO4, probably by making physical contact with LMO4 region. Position 656 is a phosphoserine; by ATM (Ser656). Residue Lys668 forms a Glycyl lysine isopeptide (Lys-Gly) (interchain with G-Cter in SUMO2) linkage. The residue at position 671 (Ser671) is a Phosphoserine. Basic and acidic residues predominate over residues 696 to 728 (KKQEQKGEESPNGERKMNDSLEDMFDRTTHEEY). A disordered region spans residues 696–757 (KKQEQKGEES…TTTKKPNISW (62 aa)). A Glycyl lysine isopeptide (Lys-Gly) (interchain with G-Cter in SUMO2) cross-link involves residue Lys711. Phosphoserine is present on Ser715. Residues 747 to 757 (STTTKKPNISW) show a composition bias toward polar residues.

It belongs to the COM1/SAE2/CtIP family. In terms of assembly, homotetramer; formed by antiparallel association of helical extensions protruding from the N-termini of two parallel coiled-coil dimers. Forms a dumbbell-shaped particle in which polar globular domains are held about 30 nm apart by a central rod. Homotetramerization is required for DNA-end resection and repair. Interacts (via the PXDLS motif) with CTBP1; the interaction is disrupted via binding of the adenovirus E1A to CTBP1. Component of the BRCA1-RBBP8 complex. Interacts (the Ser-321 phosphorylated form) with BRCA1 (via the C-terminal BRCT domains): the interaction occurs in the G2 phase, ubiquitinates RBBP8 and involves RBBP8 in BRCA1-dependent G2/M checkpoint control on DNA damage. Interacts with RB1. Interacts with the MRN complex. Interacts directly with MRE11; the interaction is required for efficient homologous recombination (HR) and regulation of the MRN complex. Interacts directly with RAD50. Interacts (when phosphorylated by CDK1) with NBN; promoting association with the MRN complex. Interacts with LMO4 (via the LIM zinc-binding 1 domain). Interacts with SIAH1. Interacts with RNF138. Interacts with EXD2. Interacts with CUL3 and KLHL15; this interaction leads to RBBP8 proteasomal degradation. Directly interacts with PIN1; this interaction depends upon RBBP8 phosphorylation, predominantly at Thr-309. Interacts with FZR1; this interaction leads to APC/C-mediated RBBP8 proteasomal degradation. Interacts with AUNIP; leading to recruit RBBP8 to sites of DNA damage. Interacts with SAMHD1. Interacts with HDGFL2. In terms of processing, hyperphosphorylation upon ionizing radiation results in dissociation from BRCA1. Phosphorylation by CDK1 is essential for the recruitment to DNA and the DNA repair function. Phosphorylated on Ser-321 as cells enter G2 phase. This phosphorylation is required for binding BRCA1 and for the G2/M DNA damage transition checkpoint control. Phosphorylation at Thr-309, probably catalyzed by CDK2, is required for PIN1-binding, while phosphorylation at Ser-272 serves as a PIN1 isomerization site. Phosphorylation at Thr-309 is cell-cycle dependent. It steadily increases during S phase, peaks at late S/G2 phase, and drops at G1. Phosphorylation is not required for tetramerization. Binds to DNA more strongly when dephosphorylated. Post-translationally, ubiquitinated. Ubiquitination at multiple sites by BRCA1 (via its N-terminal RING domain) does not lead to its proteasomal degradation but instead the ubiquitinated RBBP8 binds to chromatin following DNA damage and may play a role in G2/M checkpoint control. Ubiquitinated by RNF138 at its N-terminus. Ubiquitinated through 'Lys-48' by the E3 CUL3-KLHL15 complex; this modification leads to proteasomal degradation. Ubiquitinated by the E3 FZR1/APC/C complex; this modification leads to proteasomal degradation.

It localises to the nucleus. Its subcellular location is the chromosome. Endonuclease that cooperates with the MRE11-RAD50-NBN (MRN) complex in DNA-end resection, the first step of double-strand break (DSB) repair through the homologous recombination (HR) pathway. HR is restricted to S and G2 phases of the cell cycle and preferentially repairs DSBs resulting from replication fork collapse. Key determinant of DSB repair pathway choice, as it commits cells to HR by preventing classical non-homologous end-joining (NHEJ). Specifically promotes the endonuclease activity of the MRN complex to clear DNA ends containing protein adducts: recruited to DSBs by NBN following phosphorylation by CDK1, and promotes the endonuclease activity of MRE11 to clear protein-DNA adducts and generate clean double-strand break ends. Functions downstream of the MRN complex and ATM, promotes ATR activation and its recruitment to DSBs in the S/G2 phase facilitating the generation of ssDNA. Component of the BRCA1-RBBP8 complex that regulates CHEK1 activation and controls cell cycle G2/M checkpoints on DNA damage. During immunoglobulin heavy chain class-switch recombination, promotes microhomology-mediated alternative end joining (A-NHEJ) and plays an essential role in chromosomal translocations. Binds preferentially to DNA Y-junctions and to DNA substrates with blocked ends and promotes intermolecular DNA bridging. This is DNA endonuclease RBBP8 (RBBP8) from Bos taurus (Bovine).